Consider the following 141-residue polypeptide: Large ribosomal subunit protein uL11 (141 aa).

This sequence belongs to the universal ribosomal protein uL11 family. As to quaternary structure, part of the ribosomal stalk of the 50S ribosomal subunit. Interacts with L10 and the large rRNA to form the base of the stalk. L10 forms an elongated spine to which L12 dimers bind in a sequential fashion forming a multimeric L10(L12)X complex. One or more lysine residues are methylated.

Forms part of the ribosomal stalk which helps the ribosome interact with GTP-bound translation factors. The polypeptide is Large ribosomal subunit protein uL11 (Nitratiruptor sp. (strain SB155-2)).